The sequence spans 1111 residues: Kinesin-like protein KIP1 (1111 aa).

A compositionally biased stretch (polar residues) spans 1–11; that stretch reads MARSSLPNRRT. Residues 1-34 are disordered; sequence MARSSLPNRRTAQFEANKRRTIAHAPSPSLSNGM. In terms of domain architecture, Kinesin motor spans 52–410; it reads NIHVYVRCRS…LEYATRAKSI (359 aa). 141-148 contributes to the ATP binding site; that stretch reads GQTGTGKT. Coiled coils occupy residues 424–510, 648–670, 710–780, and 808–828; these read TCLK…IIQN, KDLNEIYQSHQQFLKNLQNDIKS, KLIK…DQDI, and HNAENTLKTVSQNNESFTNDL. Residues 1007 to 1016 show a composition bias toward basic and acidic residues; sequence AENKSKDDTS. A disordered region spans residues 1007–1111; that stretch reads AENKSKDDTS…DILQNKKLHQ (105 aa). Polar residues-rich tracts occupy residues 1017–1038 and 1057–1082; these read NSRTCIPNLSTNENFPLSQFSP and SINSAKSNRSKTLPNTEGTGRESQNN.

This sequence belongs to the TRAFAC class myosin-kinesin ATPase superfamily. Kinesin family. BimC subfamily. As to quaternary structure, might be dimeric.

It is found in the cytoplasm. The protein resides in the cytoskeleton. The protein localises to the spindle. Required for assembly of the mitotic spindle. Interacts with spindle microtubules to produce an outwardly directed force acting upon the poles. Following spindle assembly, CIN8 and KIP1 apparently act to oppose a force that draws separated poles back together. This force seems to be mediate by KAR3. The polypeptide is Kinesin-like protein KIP1 (KIP1) (Saccharomyces cerevisiae (strain ATCC 204508 / S288c) (Baker's yeast)).